The sequence spans 187 residues: tRNA (mnm(5)s(2)U34)-methyltransferase (187 aa).

S-adenosyl-L-methionine is bound by residues Asn31, Asn33, Asp51, Gln53, His77, and Glu78.

It belongs to the methyltransferase superfamily. MnmM family. Homodimer.

The catalysed reaction is 5-aminomethyl-2-thiouridine(34) in tRNA + S-adenosyl-L-methionine = 5-methylaminomethyl-2-thiouridine(34) in tRNA + S-adenosyl-L-homocysteine + H(+). It participates in tRNA modification. Functionally, involved in the biosynthesis of 5-methylaminomethyl-2-thiouridine (mnm(5)s(2)U) at the wobble position (U34) in tRNA. Catalyzes the transfer of a methyl group from S-adenosyl-L-methionine to nm(5)s(2)U34 to form mnm(5)s(2)U34. The polypeptide is tRNA (mnm(5)s(2)U34)-methyltransferase (Staphylococcus aureus (strain NCTC 8325 / PS 47)).